A 132-amino-acid chain; its full sequence is NADPH-dependent 7-cyano-7-deazaguanine reductase (132 aa).

The active-site Thioimide intermediate is the Cys48. Asp55 serves as the catalytic Proton donor. Residues Leu70–Leu72 and Met89–Glu90 contribute to the substrate site.

This sequence belongs to the GTP cyclohydrolase I family. QueF type 1 subfamily.

The protein localises to the cytoplasm. It carries out the reaction 7-aminomethyl-7-carbaguanine + 2 NADP(+) = 7-cyano-7-deazaguanine + 2 NADPH + 3 H(+). It participates in tRNA modification; tRNA-queuosine biosynthesis. Functionally, catalyzes the NADPH-dependent reduction of 7-cyano-7-deazaguanine (preQ0) to 7-aminomethyl-7-deazaguanine (preQ1). This chain is NADPH-dependent 7-cyano-7-deazaguanine reductase, found in Elusimicrobium minutum (strain Pei191).